Here is an 811-residue protein sequence, read N- to C-terminus: Leucine--tRNA ligase (811 aa).

Positions 38-49 match the 'HIGH' region motif; that stretch reads SYPSGSNLHAGH. Positions 570–574 match the 'KMSKS' region motif; the sequence is KMSKS. Residue K573 coordinates ATP.

It belongs to the class-I aminoacyl-tRNA synthetase family.

The protein resides in the cytoplasm. It catalyses the reaction tRNA(Leu) + L-leucine + ATP = L-leucyl-tRNA(Leu) + AMP + diphosphate. The chain is Leucine--tRNA ligase from Clostridium kluyveri (strain ATCC 8527 / DSM 555 / NBRC 12016 / NCIMB 10680 / K1).